A 224-amino-acid polypeptide reads, in one-letter code: Probable 2-phosphosulfolactate phosphatase (224 aa).

This sequence belongs to the ComB family. Mg(2+) is required as a cofactor.

It catalyses the reaction (2R)-O-phospho-3-sulfolactate + H2O = (2R)-3-sulfolactate + phosphate. The chain is Probable 2-phosphosulfolactate phosphatase from Pseudothermotoga lettingae (strain ATCC BAA-301 / DSM 14385 / NBRC 107922 / TMO) (Thermotoga lettingae).